The primary structure comprises 34 residues: Delta-theraphotoxin-Hm1b (34 aa).

3 cysteine pairs are disulfide-bonded: cysteine 2–cysteine 16, cysteine 9–cysteine 21, and cysteine 15–cysteine 28. Phenylalanine 34 bears the Phenylalanine amide mark.

The protein belongs to the neurotoxin 10 (Hwtx-1) family. 09 (HaTx) subfamily. Expressed by the venom gland.

Its subcellular location is the secreted. Gating-modifier toxin that potently and selectively acts on Nav1.1/SCN1A and Nav1.3/SCN3A. It enhances hNav1.1/SCN1A currents and delays fast inactivation of the channel (EC(50)=11.6 nM), leading to a sustained current. Similar effects are observed at Nav1.3/SCN3A (EC(50)=11.8 nM), but with less sustained currents. When tested on Nav1.2/SCN2A, the native toxin decreases the peak current by 50% at saturating concentration, whereas the recombinant toxin only shows a weak decrease of peak current. The native toxin specifically activates the voltage-gated sodium channel Nav1.1/SCN1A in somatosensory neurons to elicit acute pain and mechanical allodynia. When tested on Nav1.1/SCN1A, the toxin induces a hyperpolarising shift of the voltage-dependence of steady-state activation, and induces a depolarizing shift in the voltage dependence of inactivation. In addition, it does not modify the recovery from fast inactivation in Nav1.1/SCN1A. The toxin hydrophobic face probably interacts with the domain IV voltage-sensor of Nav1.1/SCN1A and Nav1.3/SCN3A and may trap the voltage-sensing S4 helix in a partially activated state. In vivo, intracerebroventricular injection into mice elicits convulsions, spasms, tremors and rapid death. When injected into mouse hindpaw, the toxin elicits an immediate and robust response to pain. However, intraplantar injection of toxin does not cause neurogenic inflammation or alter sensitivity to heat, indicative of a modality-specific effect on mechanosensitive neurons. This Heteroscodra maculata (Togo starburst tarantula) protein is Delta-theraphotoxin-Hm1b.